A 337-amino-acid polypeptide reads, in one-letter code: ERI1 exoribonuclease 3 (337 aa).

An Exonuclease domain is found at 146–320 (FLVLDFEATC…DDCKNIANIM (175 aa)). Mg(2+) contacts are provided by Asp150, Glu152, and Asp249. Glu152 acts as the Proton acceptor in catalysis. Glu152 serves as a coordination point for AMP. The Proton acceptor role is filled by His307. Position 307 (His307) interacts with AMP. Asp312 lines the Mg(2+) pocket.

As to quaternary structure, interacts with PRNP. The cofactor is Mg(2+).

The sequence is that of ERI1 exoribonuclease 3 (ERI3) from Bos taurus (Bovine).